The sequence spans 419 residues: Phosphoglycerate kinase (419 aa).

Substrate contacts are provided by residues 42-44 (DLN), Arg58, 81-84 (HLGR), Arg135, and Arg168. ATP contacts are provided by residues Lys219, Glu341, and 367 to 370 (GGDT).

It belongs to the phosphoglycerate kinase family. In terms of assembly, monomer.

Its subcellular location is the cytoplasm. The catalysed reaction is (2R)-3-phosphoglycerate + ATP = (2R)-3-phospho-glyceroyl phosphate + ADP. The protein operates within carbohydrate degradation; glycolysis; pyruvate from D-glyceraldehyde 3-phosphate: step 2/5. This chain is Phosphoglycerate kinase, found in Ralstonia nicotianae (strain ATCC BAA-1114 / GMI1000) (Ralstonia solanacearum).